Here is a 591-residue protein sequence, read N- to C-terminus: Probable Xaa-Pro aminopeptidase PEPP (591 aa).

Residues 31-59 (SIHSPPPSVSAATHGGVKNPSFSQRRTSG) form a disordered region. Mn(2+)-binding residues include aspartate 322 and aspartate 333. Positions 441–450 (GLSRQAISGS) are enriched in low complexity. Residues 441–460 (GLSRQAISGSRRLPPPRNMK) are disordered. Mn(2+)-binding residues include glutamate 511 and glutamate 552.

It belongs to the peptidase M24B family. Mn(2+) is required as a cofactor.

The enzyme catalyses Release of any N-terminal amino acid, including proline, that is linked to proline, even from a dipeptide or tripeptide.. Its function is as follows. Catalyzes the removal of a penultimate prolyl residue from the N-termini of peptides. This is Probable Xaa-Pro aminopeptidase PEPP (PEPP) from Sordaria macrospora (strain ATCC MYA-333 / DSM 997 / K(L3346) / K-hell).